Consider the following 195-residue polypeptide: Putative manganese efflux pump MntP (195 aa).

A run of 6 helical transmembrane segments spans residues 3-23, 40-60, 68-88, 106-126, 132-152, and 165-185; these read LSATLILAFGMSMDAFAASVG, GLIFGVIEAITPLIGWGLGLL, WDHWVAFTLLAFLGGRMVLAG, VLIATAIATSLDALAIGVGLA, ILHAALLIGLATLIMSTIGML, and AEIIGGLILIGIGCNILYSHI.

Belongs to the MntP (TC 9.B.29) family.

The protein resides in the cell inner membrane. Functionally, probably functions as a manganese efflux pump. The chain is Putative manganese efflux pump MntP from Sodalis glossinidius (strain morsitans).